Here is a 90-residue protein sequence, read N- to C-terminus: Potassium channel toxin BmTXK-beta (90 aa).

The N-terminal stretch at 1 to 22 (MMKQQFFLFLAVIVMISSVIEA) is a signal peptide. A propeptide spanning residues 23–29 (GRGKEIM) is cleaved from the precursor. The 36-residue stretch at 55–90 (EYACPVIEKWCEDHCAAKKAIGKCEDTECKCLKLRK) folds into the BetaSPN-type CS-alpha/beta domain. Cystine bridges form between C58–C78, C65–C83, and C69–C85.

This sequence belongs to the long chain scorpion toxin family. Class 2 subfamily. As to expression, expressed by the venom gland.

The protein resides in the secreted. This recombinant peptide reversibly and dose-dependently inhibits the transient outward potassium current (I(To)) of rabbit atrial myocyte and prolongs the action potential duration of rabbit atrial myocyte without affecting the action potential amplitude. Thus, the voltage-gated potassium channels Kv4.1/KCND1, Kv4.2/KCND2, Kv4.3/KCND3 may be the target of this toxin. The protein is Potassium channel toxin BmTXK-beta of Olivierus martensii (Manchurian scorpion).